We begin with the raw amino-acid sequence, 642 residues long: Zinc finger protein 14 (642 aa).

One can recognise a KRAB domain in the interval 4-76 (VSFEDVAVNF…MVERLCESRK (73 aa)). Residues 77–99 (GSKCGETTSQMPNVNINKETSTG) are disordered. Positions 81 to 99 (GETTSQMPNVNINKETSTG) are enriched in polar residues. The C2H2-type 1 zinc finger occupies 103–125 (HECSFCGKDFMHHSSLNRHMRSH). The C2H2-type 2; degenerate zinc finger occupies 141–163 (CKRKAVGKTFSYRHCVRKHERTH). The segment at 169–191 (YECKQCGKAFIYYQPFQRHERIH) adopts a C2H2-type 3 zinc-finger fold. The C2H2-type 4; atypical zinc finger occupies 197–217 (YECKQCGKTFIYYQSFQKHAH). 15 C2H2-type zinc fingers span residues 223 to 245 (YECKQCGKTFICYQSFQRHERTH), 251 to 273 (YECKQCGKAFSCPTYFRTHERTH), 279 to 301 (YKCKECGKAFSFLSSFRRHKRTH), 307 to 329 (YECKECGKAFFYSASFQAHVITH), 335 to 357 (YKCKECGKAFNSSNSCRVHERTH), 363 to 385 (YECKRCGKSFSWSISLRMHERTH), 391 to 413 (YECKQCHKTFSFSSSLREHETTH), 419 to 441 (YECKQCGKAFRFSSSLQRHERTH), 447 to 469 (YECKQCGKAFRCSSYFRIHERSH), 475 to 497 (YECKQCGKVFIRSSSFRLHERTH), 503 to 525 (YECKLCGKAFSFSSSLREHEKIH), 531 to 553 (FECKRCGKAFLRSSQIRLHERTH), 559 to 581 (YQCKQCGKAFISSSKFRMHERTH), 587 to 609 (YRCKQCGKAFRFSSSVRIHERSH), and 615 to 637 (YECKQCGKAFISSSHFRLHERTH).

It belongs to the krueppel C2H2-type zinc-finger protein family.

The protein localises to the nucleus. Its function is as follows. May be involved in transcriptional regulation. The sequence is that of Zinc finger protein 14 (ZNF14) from Macaca fascicularis (Crab-eating macaque).